The chain runs to 248 residues: Ureidoacrylate amidohydrolase RutB (248 aa).

Residue aspartate 43 is the Proton acceptor of the active site. Lysine 152 is an active-site residue. Catalysis depends on cysteine 185, which acts as the Nucleophile.

The protein belongs to the isochorismatase family. RutB subfamily.

It catalyses the reaction (Z)-3-ureidoacrylate + H2O + H(+) = (Z)-3-aminoacrylate + NH4(+) + CO2. It carries out the reaction (Z)-3-ureidoacrylate + H2O = (Z)-3-aminoacrylate + carbamate + H(+). The catalysed reaction is (Z)-2-methylureidoacrylate + H2O + H(+) = (Z)-2-methylaminoacrylate + NH4(+) + CO2. Hydrolyzes ureidoacrylate to form aminoacrylate and carbamate. The carbamate hydrolyzes spontaneously, thereby releasing one of the nitrogen atoms of the pyrimidine ring as ammonia and one of its carbon atoms as CO2. This chain is Ureidoacrylate amidohydrolase RutB, found in Serratia proteamaculans (strain 568).